Reading from the N-terminus, the 163-residue chain is Meiotically up-regulated gene 109 protein (163 aa).

4 helical membrane passes run 61 to 78 (YRFY…FFIW), 82 to 104 (ALLA…SLTI), 114 to 134 (YSIP…APVG), and 136 to 156 (LFWS…LTTY).

It localises to the membrane. Has a role in meiosis. The protein is Meiotically up-regulated gene 109 protein (mug109) of Schizosaccharomyces pombe (strain 972 / ATCC 24843) (Fission yeast).